The sequence spans 268 residues: F-actin-capping protein subunit beta (268 aa).

It belongs to the F-actin-capping protein beta subunit family. Component of the F-actin capping complex, composed of a heterodimer of an alpha and a beta subunit.

The protein localises to the cytoplasm. The protein resides in the cytoskeleton. It is found in the actin patch. Its subcellular location is the nucleus. F-actin-capping proteins bind in a Ca(2+)-independent manner to the fast growing ends of actin filaments (barbed end) thereby blocking the exchange of subunits at these ends. Unlike other capping proteins (such as gelsolin and severin), these proteins do not sever actin filaments. Competes with formin cdc12 for attachment to the actin filaments barbed ends. Slowly replaces cdc12 on the barbed ends in preparation for filament disassembly during contractile ring constriction. In Schizosaccharomyces pombe (strain 972 / ATCC 24843) (Fission yeast), this protein is F-actin-capping protein subunit beta (acp2).